We begin with the raw amino-acid sequence, 64 residues long: Putative antitoxin VapB51 (64 aa).

Its function is as follows. Possibly the antitoxin component of a type II toxin-antitoxin (TA) system. Its cognate toxin is VapC51. The protein is Putative antitoxin VapB51 of Mycobacterium tuberculosis (strain ATCC 25618 / H37Rv).